Consider the following 209-residue polypeptide: Thymidylate kinase (209 aa).

An ATP-binding site is contributed by 11–18; that stretch reads GIEGAGKT.

This sequence belongs to the thymidylate kinase family.

The catalysed reaction is dTMP + ATP = dTDP + ADP. Phosphorylation of dTMP to form dTDP in both de novo and salvage pathways of dTTP synthesis. The protein is Thymidylate kinase (tmk) of Pasteurella multocida (strain Pm70).